The following is a 297-amino-acid chain: Thiosulfate sulfurtransferase (297 aa).

Position 14 is an N6-acetyllysine; alternate (Lys14). N6-succinyllysine; alternate is present on Lys14. The Rhodanese 1 domain maps to 25–143 (LGPGLRVLDA…WLKEGHPVTS (119 aa)). Ser35 carries an O-linked (GlcNAc) serine glycan. Ser38 carries the phosphoserine modification. Lys136 bears the N6-acetyllysine; alternate mark. The residue at position 136 (Lys136) is an N6-succinyllysine; alternate. Residues 144–159 (EPSRPEPAVFKATLDR) are hinge. Lys163 bears the N6-acetyllysine mark. In terms of domain architecture, Rhodanese 2 spans 173–288 (QSKRFQLVDS…WFHQAPPETR (116 aa)). The residue at position 175 (Lys175) is an N6-acetyllysine; alternate. Position 175 is an N6-succinyllysine; alternate (Lys175). Arg187 is a substrate binding site. An N6-acetyllysine; alternate modification is found at Lys224. An N6-succinyllysine; alternate modification is found at Lys224. Lys236 carries the N6-acetyllysine modification. N6-acetyllysine; alternate is present on Lys237. At Lys237 the chain carries N6-succinyllysine; alternate. Residue Cys248 is the Cysteine persulfide intermediate of the active site. Lys250 provides a ligand contact to substrate.

As to quaternary structure, monomer.

Its subcellular location is the mitochondrion matrix. It catalyses the reaction thiosulfate + hydrogen cyanide = thiocyanate + sulfite + 2 H(+). Together with MRPL18, acts as a mitochondrial import factor for the cytosolic 5S rRNA. Only the nascent unfolded cytoplasmic form is able to bind to the 5S rRNA. Formation of iron-sulfur complexes and cyanide detoxification. Binds molecular oxygen and sulfur. This is Thiosulfate sulfurtransferase (TST) from Cricetulus griseus (Chinese hamster).